The sequence spans 585 residues: uncharacterized protein (585 aa).

The interval 1-34 is disordered; the sequence is MNAYVRDSESVYSESYPPENFISNEPEKSKDKDN. Topologically, residues 1–89 are cytoplasmic; that stretch reads MNAYVRDSES…KRRLKSRHIQ (89 aa). Over residues 10-19 the composition is skewed to low complexity; the sequence is SVYSESYPPE. The segment covering 25–34 has biased composition (basic and acidic residues); the sequence is EPEKSKDKDN. The helical transmembrane segment at 90–110 threads the bilayer; sequence MIGIGGAIGTGVWVGSSKSLY. At 111-121 the chain is on the extracellular side; it reads RGGAASVLIDY. Residues 122–142 traverse the membrane as a helical segment; that stretch reads CIVGTMVFCTVYALGELAVAF. The Cytoplasmic portion of the chain corresponds to 143–159; sequence PTRGSFVTHATRFIDES. A helical transmembrane segment spans residues 160–180; the sequence is WGFALSWNYVFSFIVTIPLEL. At 181-193 the chain is on the extracellular side; sequence TTGTMMIKYWTNL. The chain crosses the membrane as a helical span at residues 194–214; that stretch reads NSGIWVTVFIVFLFFINIFGV. Residues 215–221 lie on the Cytoplasmic side of the membrane; that stretch reads KGYGEME. Residues 222–242 traverse the membrane as a helical segment; that stretch reads FIMSTIKVVAMCGFIILGIII. The Extracellular portion of the chain corresponds to 243–271; sequence DCGGVPTDHRGYMGTHIFRENAFRHKFKG. Residues 272–292 form a helical membrane-spanning segment; it reads FCAVFTSAAFSFSGTEYVGVA. The Cytoplasmic segment spans residues 293 to 313; sequence AAETENPAKAFPVAVRQTLFR. The helical transmembrane segment at 314-334 threads the bilayer; it reads IAIFYILSLFIVSLLISGADP. Topologically, residues 335 to 361 are extracellular; sequence RLTSYHGVDASPFVLAIKDANIKALPS. A helical membrane pass occupies residues 362-382; sequence ILNAIILISVISSANAQLYAG. The Cytoplasmic portion of the chain corresponds to 383–407; that stretch reads SRAIHSLGCNGFAPKCFTLVDREGR. The helical transmembrane segment at 408 to 428 threads the bilayer; sequence PLVALLILFLFMFLGYLVETG. The Extracellular portion of the chain corresponds to 429-436; that stretch reads QYDTVFDW. The helical transmembrane segment at 437 to 457 threads the bilayer; that stretch reads MLSISGLGTLFCWGSICLAHI. Residues 458–486 lie on the Cytoplasmic side of the membrane; the sequence is RYRAAMKHQNRSLKEVGFVSPFNVYASYY. A helical transmembrane segment spans residues 487-507; it reads AFILVCLVLAAEFYVSIFPVG. Topologically, residues 508-511 are extracellular; that stretch reads GKPD. The helical transmembrane segment at 512-532 threads the bilayer; that stretch reads ASAFFENYLSAPVILVFFICH. At 533-585 the chain is on the cytoplasmic side; sequence KLYYKTKRITLSNMDLETDFAYKTPVEEEEEEEKSAGSLSIKQRMKKLSDMMC.

This sequence belongs to the amino acid-polyamine-organocation (APC) superfamily.

The protein localises to the endoplasmic reticulum. The protein resides in the membrane. This is an uncharacterized protein from Schizosaccharomyces pombe (strain 972 / ATCC 24843) (Fission yeast).